Reading from the N-terminus, the 269-residue chain is MKI67 FHA domain-interacting nucleolar phosphoprotein (269 aa).

An RRM domain is found at 45 to 123; sequence GVLYVGHLPR…RIIKCHVIPP (79 aa). The segment at 234–269 is disordered; it reads DEIVIKVKPLPENSDDVEESEEESAEEDEGEEEEAA. The segment covering 246-269 has biased composition (acidic residues); it reads NSDDVEESEEESAEEDEGEEEEAA.

Its subcellular location is the nucleus. The protein resides in the nucleolus. Its function is as follows. Plays an essential role in early embryonic development. This Danio rerio (Zebrafish) protein is MKI67 FHA domain-interacting nucleolar phosphoprotein (nifk).